The sequence spans 562 residues: Protein wntless (562 aa).

Topologically, residues 1-13 (MSGTILENLSGRK) are cytoplasmic. A helical transmembrane segment spans residues 14 to 34 (LSILVGSLLLCQVLCFLLGGL). The Lumenal portion of the chain corresponds to 35-239 (YAPVPAGHTN…AIHQNGGFTH (205 aa)). Asn58 carries N-linked (GlcNAc...) asparagine glycosylation. A helical membrane pass occupies residues 240–260 (VWLMLKTLLFPFVVGIMVWFW). At 261 to 270 (RRVHLLQRSP) the chain is on the cytoplasmic side. The chain crosses the membrane as a helical span at residues 271–291 (ALLEYMLLYLGGALTFLNLPL). Over 292 to 311 (EYLSLTIEMPYMLLLSDIRQ) the chain is Lumenal. The helical transmembrane segment at 312 to 332 (GIFYAMLLSFWLVFAGEHMLI) threads the bilayer. Over 333 to 344 (QDSHNKSTIRSR) the chain is Cytoplasmic. The helical transmembrane segment at 345–365 (YWKHLSAVVVGCISLFVFDIS) threads the bilayer. Residues 366-386 (ERGVQLRNPFYSIWTTPLGAK) lie on the Lumenal side of the membrane. The chain crosses the membrane as a helical span at residues 387–407 (VAMSFILLAGVSAAVYFLFLC). Topologically, residues 408-441 (YMISKVFKNIGDKRTSLPSMSQARRLHYEGLIYR) are cytoplasmic. The chain crosses the membrane as a helical span at residues 442–462 (FKFLMLATLLCAALTVTGFIM). Residues 463 to 482 (GQMAEGQWKWNDDVEIQLTS) are Lumenal-facing. The helical transmembrane segment at 483–503 (AFLTGVYGMWNIYIFALLILY) threads the bilayer. Over 504 to 562 (APSHKQWPTMHHSDETTQSNENIVASAASEEIEFSNLPSDSNPSEISSLTSFTRKVAFE) the chain is Cytoplasmic. The tract at residues 538–562 (SNLPSDSNPSEISSLTSFTRKVAFE) is disordered. A compositionally biased stretch (polar residues) spans 539-556 (NLPSDSNPSEISSLTSFT).

The protein belongs to the wntless family. In terms of assembly, interacts with wg; in the Golgi. Interacts with Vps35, a component of the retromer complex; wls stability is regulated by Vps35.

It is found in the presynaptic cell membrane. The protein localises to the postsynaptic cell membrane. The protein resides in the cell membrane. It localises to the endoplasmic reticulum membrane. Its subcellular location is the endosome membrane. It is found in the golgi apparatus membrane. Its function is as follows. A segment polarity gene required for wingless (wg)-dependent patterning processes, acting in both wg-sending cells and wg-target cells. In non-neuronal cells wls directs wg secretion. The wls traffic loop encompasses the Golgi, the cell surface, an endocytic compartment and a retrograde route leading back to the Golgi, and involves clathrin-mediated endocytosis and the retromer complex (a conserved protein complex consisting of Vps35 and Vps26). In neuronal cells (the larval motorneuron NMJ), the wg signal moves across the synapse via the release of wls-containing exosome-like vesicles. Postsynaptic wls is required for the trafficking of fz2 through the fz2-interacting protein Grip. The polypeptide is Protein wntless (Drosophila persimilis (Fruit fly)).